Consider the following 492-residue polypeptide: G protein-activated inward rectifier potassium channel 1 (492 aa).

Residues 1-72 lie on the Cytoplasmic side of the membrane; that stretch reads MSALRRKLGD…LFTTLVDLKW (72 aa). The disordered stretch occupies residues 16-35; that stretch reads STSASGGGLPPPRAAPRGKR. The helical transmembrane segment at 73-97 threads the bilayer; that stretch reads RWNLFIFVLTYTVAWLFMASMWWVI. Residues 98–121 are Extracellular-facing; sequence AYMRGDLNKAHDDSYTPCVANVYN. Positions 122 to 133 form an intramembrane region, helical; Pore-forming; sequence FPSAFLFFIETE. The pore-forming intramembrane region spans 134–140; sequence ATIGYGY. A Selectivity filter motif is present at residues 135–140; it reads TIGYGY. Over 141–149 the chain is Extracellular; that stretch reads RYITDKCPE. The helical transmembrane segment at 150–171 threads the bilayer; sequence GIILFLFQSILGSIVDAFLIGC. At 172–492 the chain is on the cytoplasmic side; it reads MFIKMSQPKK…LRKMNSDRFT (321 aa). Residues 174–201 form a polyphosphoinositide (PIP2)-binding region; sequence IKMSQPKKRAETLMFSEHAAISMRDGKL. Residues 452–492 are disordered; the sequence is SDPMSQSVADLPPKLQKLSGGGRMEGNLPPKLRKMNSDRFT.

The protein belongs to the inward rectifier-type potassium channel (TC 1.A.2.1) family. KCNJ3 subfamily. As to quaternary structure, associates with KCNJ5/GIRK4 or KCNJ6/GIRK2 or KCNJ9/GIRK3 to form a G-protein activated heteromultimer pore-forming unit. The resulting inward current is much larger.

The protein localises to the membrane. It catalyses the reaction K(+)(in) = K(+)(out). With respect to regulation, heteromultimer composed of KCNJ3/GIRK1 and KCNJ5/GIRK4 is activated by phosphatidylinositol 4,5 biphosphate (PtdIns(4,5)P2). Functionally, inward rectifier potassium channels are characterized by a greater tendency to allow potassium to flow into the cell rather than out of it. Their voltage dependence is regulated by the concentration of extracellular potassium; as external potassium is raised, the voltage range of the channel opening shifts to more positive voltages. The inward rectification is mainly due to the blockage of outward current by internal magnesium. This potassium channel is controlled by G proteins. This receptor plays a crucial role in regulating the heartbeat. This is G protein-activated inward rectifier potassium channel 1 (KCNJ3) from Gallus gallus (Chicken).